The primary structure comprises 120 residues: NAD(P)H-quinone oxidoreductase subunit 3 (120 aa).

The next 3 membrane-spanning stretches (helical) occupy residues 10–30 (FLGFLLIAAAVPILALVTNLI), 64–84 (MFALVFVIFDVETVFLYPWAV), and 89–109 (LGLLAFIEALIFIAILVIALA).

It belongs to the complex I subunit 3 family. As to quaternary structure, NDH-1 can be composed of about 15 different subunits; different subcomplexes with different compositions have been identified which probably have different functions.

The protein resides in the cellular thylakoid membrane. The catalysed reaction is a plastoquinone + NADH + (n+1) H(+)(in) = a plastoquinol + NAD(+) + n H(+)(out). It carries out the reaction a plastoquinone + NADPH + (n+1) H(+)(in) = a plastoquinol + NADP(+) + n H(+)(out). In terms of biological role, NDH-1 shuttles electrons from an unknown electron donor, via FMN and iron-sulfur (Fe-S) centers, to quinones in the respiratory and/or the photosynthetic chain. The immediate electron acceptor for the enzyme in this species is believed to be plastoquinone. Couples the redox reaction to proton translocation, and thus conserves the redox energy in a proton gradient. Cyanobacterial NDH-1 also plays a role in inorganic carbon-concentration. This Prochlorococcus marinus (strain MIT 9215) protein is NAD(P)H-quinone oxidoreductase subunit 3.